Reading from the N-terminus, the 460-residue chain is tRNA-splicing endonuclease subunit Sen2 (460 aa).

Positions 143–215 are disordered; it reads EKEETPQHEP…SPSSHNGHVA (73 aa). A compositionally biased stretch (basic and acidic residues) spans 159-170; it reads SSLEGRVEKDEL. Residues Tyr364 and His372 contribute to the active site. Phosphoserine is present on residues Ser403, Ser406, and Ser410. Lys411 is an active-site residue.

This sequence belongs to the tRNA-intron endonuclease family. In terms of assembly, tRNA splicing endonuclease is a heterotetramer composed of TSEN2, TSEN15, TSEN34/LENG5 and TSEN54. tRNA splicing endonuclease complex also contains proteins of the pre-mRNA 3'-end processing machinery such as CLP1, CPSF1, CPSF4 and CSTF2.

The protein resides in the nucleus. It is found in the nucleolus. It carries out the reaction pretRNA = a 3'-half-tRNA molecule with a 5'-OH end + a 5'-half-tRNA molecule with a 2',3'-cyclic phosphate end + an intron with a 2',3'-cyclic phosphate and a 5'-hydroxyl terminus.. Functionally, constitutes one of the two catalytic subunit of the tRNA-splicing endonuclease complex, a complex responsible for identification and cleavage of the splice sites in pre-tRNA. It cleaves pre-tRNA at the 5'- and 3'-splice sites to release the intron. The products are an intron and two tRNA half-molecules bearing 2',3'-cyclic phosphate and 5'-OH termini. There are no conserved sequences at the splice sites, but the intron is invariably located at the same site in the gene, placing the splice sites an invariant distance from the constant structural features of the tRNA body. Probably carries the active site for 5'-splice site cleavage. The tRNA splicing endonuclease is also involved in mRNA processing via its association with pre-mRNA 3'-end processing factors, establishing a link between pre-tRNA splicing and pre-mRNA 3'-end formation, suggesting that the endonuclease subunits function in multiple RNA-processing events. The protein is tRNA-splicing endonuclease subunit Sen2 (Tsen2) of Mus musculus (Mouse).